A 248-amino-acid chain; its full sequence is tRNA (guanine-N(1)-)-methyltransferase (248 aa).

Residues glycine 116 and 135-140 (IGDFVL) each bind S-adenosyl-L-methionine.

The protein belongs to the RNA methyltransferase TrmD family. As to quaternary structure, homodimer.

It localises to the cytoplasm. It catalyses the reaction guanosine(37) in tRNA + S-adenosyl-L-methionine = N(1)-methylguanosine(37) in tRNA + S-adenosyl-L-homocysteine + H(+). Specifically methylates guanosine-37 in various tRNAs. The chain is tRNA (guanine-N(1)-)-methyltransferase from Anaeromyxobacter sp. (strain Fw109-5).